The chain runs to 238 residues: Lactate utilization protein A (238 aa).

The protein belongs to the LutA/YkgE family.

Functionally, is involved in L-lactate degradation and allows cells to grow with lactate as the sole carbon source. This is Lactate utilization protein A from Bacillus licheniformis (strain ATCC 14580 / DSM 13 / JCM 2505 / CCUG 7422 / NBRC 12200 / NCIMB 9375 / NCTC 10341 / NRRL NRS-1264 / Gibson 46).